Consider the following 514-residue polypeptide: Alanine--glyoxylate aminotransferase 2, mitochondrial (514 aa).

The N-terminal 41 residues, Met1 to Ser41, are a transit peptide targeting the mitochondrion. Residue Lys71 is modified to N6-acetyllysine; alternate. N6-succinyllysine; alternate is present on Lys71. An N6-acetyllysine modification is found at Lys84. At Lys262 the chain carries N6-acetyllysine; alternate. Lys262 carries the post-translational modification N6-succinyllysine; alternate. Lys304 is subject to N6-succinyllysine. Lys350 bears the N6-(pyridoxal phosphate)lysine mark. Lys417 and Lys420 each carry N6-acetyllysine; alternate. Lys417 and Lys420 each carry N6-succinyllysine; alternate.

This sequence belongs to the class-III pyridoxal-phosphate-dependent aminotransferase family. Homotetramer. The cofactor is pyridoxal 5'-phosphate. Expressed in the convoluted tubule in the kidney and in the liver hepatocytes (at protein level).

It localises to the mitochondrion. It catalyses the reaction glyoxylate + L-alanine = glycine + pyruvate. It carries out the reaction (R)-3-amino-2-methylpropanoate + pyruvate = 2-methyl-3-oxopropanoate + L-alanine. The enzyme catalyses 3-oxopropanoate + L-alanine = beta-alanine + pyruvate. The catalysed reaction is 2-oxobutanoate + L-alanine = (2S)-2-aminobutanoate + pyruvate. It catalyses the reaction N(omega),N(omega)-dimethyl-L-arginine + pyruvate = 5-(3,3-dimethylguanidino)-2-oxopentanoate + L-alanine. It carries out the reaction N(omega),N('omega)-dimethyl-L-arginine + pyruvate = 5-(3,3'-dimethylguanidino)-2-oxopentanoate + L-alanine. The enzyme catalyses N(omega),N(omega)-dimethyl-L-arginine + glyoxylate = 5-(3,3-dimethylguanidino)-2-oxopentanoate + glycine. The catalysed reaction is N(omega),N('omega)-dimethyl-L-arginine + glyoxylate = 5-(3,3'-dimethylguanidino)-2-oxopentanoate + glycine. It catalyses the reaction N(omega)-methyl-L-arginine + pyruvate = 5-(3-methylguanidino)-2-oxopentanoate + L-alanine. It carries out the reaction N(omega)-methyl-L-arginine + glyoxylate = 5-(3-methylguanidino)-2-oxopentanoate + glycine. The enzyme catalyses L-ornithine + pyruvate = 5-amino-2-oxopentanoate + L-alanine. The catalysed reaction is L-ornithine + glyoxylate = 5-amino-2-oxopentanoate + glycine. It catalyses the reaction (2S)-2-aminobutanoate + glyoxylate = 2-oxobutanoate + glycine. It carries out the reaction N(omega),N(omega)-dimethyl-L-arginine + oxaloacetate = 5-(3,3-dimethylguanidino)-2-oxopentanoate + L-aspartate. The enzyme catalyses oxaloacetate + L-alanine = L-aspartate + pyruvate. The catalysed reaction is N(omega),N(omega)-dimethyl-L-arginine + 2-oxobutanoate = 5-(3,3-dimethylguanidino)-2-oxopentanoate + (2S)-2-aminobutanoate. It catalyses the reaction 2-oxopentanoate + N(omega),N(omega)-dimethyl-L-arginine = 5-(3,3-dimethylguanidino)-2-oxopentanoate + L-2-aminopentanoate. It carries out the reaction 2-oxohexanoate + N(omega),N(omega)-dimethyl-L-arginine = L-2-aminohexanoate + 5-(3,3-dimethylguanidino)-2-oxopentanoate. Its function is as follows. Multifunctional aminotransferase with a broad substrate specificity. Catalyzes the conversion of glyoxylate to glycine using alanine as the amino donor. Catalyzes metabolism of not L- but the D-isomer of D-beta-aminoisobutyric acid to generate 2-methyl-3-oxopropanoate and alanine. Catalyzes the transfer of the amino group from beta-alanine to pyruvate to yield L-alanine and 3-oxopropanoate. Can metabolize NG-monomethyl-L-arginine (NMMA), asymmetric NG,NG-dimethyl-L-arginine (ADMA) and symmetric NG,N'G-dimethyl-L-arginine (SDMA). ADMA is a potent inhibitor of nitric-oxide (NO) synthase, and this activity provides mechanism through which the kidney regulates blood pressure. This chain is Alanine--glyoxylate aminotransferase 2, mitochondrial (AGXT2), found in Homo sapiens (Human).